A 685-amino-acid chain; its full sequence is Putative pentatricopeptide repeat-containing protein At3g08820 (685 aa).

12 PPR repeats span residues 75 to 109 (NIFL…GLYL), 110 to 144 (HGFT…GFNH), 145 to 175 (DVAA…IPDR), 176 to 210 (SVVT…GVKP), 211 to 245 (DSYF…EMQK), 246 to 276 (NSFV…MVEK), 277 to 311 (DIVT…NLKP), 312 to 346 (DQFS…EFLT), 347 to 381 (NLFM…DIVI), 383 to 412 (NAAI…GISP), 413 to 443 (DGST…ISCV), and 449 to 479 (TVEH…MPMR). Residues 484-559 (VWGALLSGCR…IPGYSWIELE (76 aa)) are type E motif. Residues 560–590 (GKVHEFLADDKSHPLSDKIYAKLEDLGNEMR) are type E(+) motif. A type DYW motif region spans residues 591–685 (LMGFVPTTEF…NGSCSCNDYW (95 aa)).

This sequence belongs to the PPR family. PCMP-H subfamily.

The polypeptide is Putative pentatricopeptide repeat-containing protein At3g08820 (PCMP-H84) (Arabidopsis thaliana (Mouse-ear cress)).